The sequence spans 282 residues: Putative lactoylglutathione lyase (282 aa).

Alanine 2 is modified (N-acetylalanine). 2 VOC domains span residues arginine 17–arginine 141 and proline 147–asparagine 274. Histidine 20 serves as a coordination point for Zn(2+). Substrate is bound at residue arginine 24. Glutamate 71 provides a ligand contact to Zn(2+). Substrate-binding residues include asparagine 75 and histidine 89. Positions 89 and 137 each coordinate Zn(2+). Glutamate 137 acts as the Proton donor/acceptor in catalysis. Leucine 254–glycine 255 is a binding site for substrate.

This sequence belongs to the glyoxalase I family. Zn(2+) serves as cofactor.

It carries out the reaction (R)-S-lactoylglutathione = methylglyoxal + glutathione. Its pathway is secondary metabolite metabolism; methylglyoxal degradation; (R)-lactate from methylglyoxal: step 1/2. In terms of biological role, catalyzes the conversion of hemimercaptal, formed from methylglyoxal and glutathione, to S-lactoylglutathione. This chain is Putative lactoylglutathione lyase, found in Brassica oleracea var. gemmifera (Brussel sprouts).